Reading from the N-terminus, the 525-residue chain is Cytochrome P450 CYP72A613 (525 aa).

Residues 2-22 (VFLFPTGTIIIWVLTILLAVI) traverse the membrane as a helical segment. Cys-473 is a heme binding site.

It belongs to the cytochrome P450 family. Mainly expressed in leaves and seed pods and, to a lower extent, in flowers and stems.

The protein localises to the membrane. Its pathway is steroid metabolism; cholesterol metabolism. Involved in the biosynthesis of spiroketal steroid and saponin natural products from cholesterol such as diosgenin and analogs (e.g. furostanol and spirostanol), plant defense compounds used as main precursors for the industrial production of steroid hormones. During the 5,6-spiroketalization of cholesterol, may catalyze the 27-monohydroxylation of furostanol-type steroid to an intermediate product that undergoes a stereospecific formation of the terminal heterocycle to yield diosgenin. This is Cytochrome P450 CYP72A613 from Trigonella foenum-graecum (Fenugreek).